The primary structure comprises 186 residues: UPF0200 protein Mbar_A0975 (186 aa).

An ATP-binding site is contributed by 8 to 15 (GMPASGKS).

The protein belongs to the UPF0200 family.

This chain is UPF0200 protein Mbar_A0975, found in Methanosarcina barkeri (strain Fusaro / DSM 804).